Consider the following 306-residue polypeptide: Oxygen-dependent coproporphyrinogen-III oxidase (306 aa).

Substrate is bound at residue Ser-99. A divalent metal cation is bound by residues His-103 and His-113. His-113 functions as the Proton donor in the catalytic mechanism. 115 to 117 (NVR) contributes to the substrate binding site. Residues His-152 and His-182 each coordinate a divalent metal cation. The important for dimerization stretch occupies residues 247–282 (YVEFNLVFDRGTLFGLQSGGRTESILMSMPPVANWR). 265–267 (GGR) provides a ligand contact to substrate.

This sequence belongs to the aerobic coproporphyrinogen-III oxidase family. In terms of assembly, homodimer. The cofactor is a divalent metal cation.

The protein localises to the cytoplasm. It catalyses the reaction coproporphyrinogen III + O2 + 2 H(+) = protoporphyrinogen IX + 2 CO2 + 2 H2O. Its pathway is porphyrin-containing compound metabolism; protoporphyrin-IX biosynthesis; protoporphyrinogen-IX from coproporphyrinogen-III (O2 route): step 1/1. Functionally, involved in the heme biosynthesis. Catalyzes the aerobic oxidative decarboxylation of propionate groups of rings A and B of coproporphyrinogen-III to yield the vinyl groups in protoporphyrinogen-IX. The sequence is that of Oxygen-dependent coproporphyrinogen-III oxidase from Burkholderia ambifaria (strain MC40-6).